Here is a 103-residue protein sequence, read N- to C-terminus: Phosphoribosyl-ATP pyrophosphatase (103 aa).

The protein belongs to the PRA-PH family.

Its subcellular location is the cytoplasm. The enzyme catalyses 1-(5-phospho-beta-D-ribosyl)-ATP + H2O = 1-(5-phospho-beta-D-ribosyl)-5'-AMP + diphosphate + H(+). It functions in the pathway amino-acid biosynthesis; L-histidine biosynthesis; L-histidine from 5-phospho-alpha-D-ribose 1-diphosphate: step 2/9. The chain is Phosphoribosyl-ATP pyrophosphatase from Cereibacter sphaeroides (strain ATCC 17025 / ATH 2.4.3) (Rhodobacter sphaeroides).